The primary structure comprises 2173 residues: MAAFGVLSYEHRPLKRPRLGPPDVYPQDPKQKEDELTALNVKQGFNNQPAVSGDEHGSAKNVNFNSSKISSNFSSIIAEKLRCNTFPDTGKRKPQVNQKDNFWLVTARSQSSINNWFTDLAGTKPLTQLAKKVPIFSKKEEVFGYLAKYSVPVMRSAWMIKMTCAYHAAITENKMKKRHVIDPCIEWTPIITKYLWEQLQKVAEFYRQSPSQGCGSPLPAPPAEVETAMKQWEYNEKLAMFMFQDGMLDRHEFLTWVLECFEKIRPGEDELLRLLLPLLLQYSGEFVQSAYLSRRLAYFCTRRLNLLLSDGSIGPGPGGHQAHGISAQQGNALPPTPTSQPAGGNQPQTPFTDFYICPQHRPVVFGLSCMLQSIVLCCPSALVWHYSLTDSRNKTGSPLDLLPIAPSNLPMPGGNSTFNQQVRAKVREIEEQIKERGQAVEFRWSFDKCQETTAGFTISRVLHTLEVLDNHSFEKSDFSNSLDSLYNRIFGSGQSKDGHEMSPDDDAVVTLLCEWAVSCKRSGPHRAMVVAKLLEKRQTEIEAERCGESEVVDEKGSVSSGSLSAATLPVFQDVLLQFLDTQAPVLTEPGNESERVEFSNLVLLFYELIRHDVFSHNIYMCTLISRGDLASNSHLPRPRSPSDEPSDESERKDQDAGSSVKMEDTGMSESMEIDHNSSANFDEMFSPPMHCESKGSPSPEKQAQEQESKSTAKDKGMDPAFPLVYEQPRHIQYATHFPIPQEESASHECNQRLVVLYGVGKQRDEARHAIKKITKDILKVLNRKSTAETGGEEGQKRKRSKPEAFPTAEDIFSKFQHLSHFDQHQVTSQVSRNVLEQITSFALGMSYHLPLVQHIQFIFDLMEYSLNISGLIDFAIQLLNELSLVEAELLLKSSNLAGSYTTGLCLCIVAVLRRYHSCLILNPDQTAQVFDGLRIVVKSGVNPADCSSAERCILAYLYDLYTSCSHLKSKFGEIFSEFCSKVKNSIYYNIDPSDSNMLWDQMFMIDAITNPTAHNLNHSMLGKITNELNDSPANRYSFVCNVLMDVCVDHRDPERVNDIGILCAELTAYCRSLSAEWLGVLKALCCSSNNGNCGFNDLLCNVDVSDLSFHDSLATFVAILIARQCLLLEDLVRCVAIPSLLNAACSEQDSEPGARLTCRILLHLFRTPQRNPCPQDGTKSDKSIVGIRSSCDRHLLAASQNSIVVGAVFAVLKAVFMLGDAELKGSGFSHPAGLDDIGEDDMGSKKSGGRNVSIETASLVVYAKYVLKSICHQEWVGERCLKSLSEDSSALQDPVLVNIQAQRLLQLICYPHRQLDSEEGDNPQRQRIKRILQNMDQWTMRQSSLELQLMIKQSSNNELYSLLENIAKATIEVFQKSAEMNSSNPSWNGSAVSGSSVSNSNSASKLKPVLSSSERSGVWLVAPLIGKLPTSVQGHVLKAAGEELEKGQHLGPSSRKERDRQKQKSMSLLSQQPFLSLVLTCLKGQDEQREGLLTSLYSQVQQIVTNWREDQYQDDCKAKQMMHEALKLRLNLVGGMFDTVQRSTQQTTEWAVLLLDIISSGTVDMQSNNELFTTVLDMLSVLINGTLAADMSSISQGSMEENKRAYMNLVKKLRKELGDRQSESLEKVRQLLPLPKQTRDVITCEPQGSLIDTKGNKIAGFEKEGLQVSTKQKISPWDVFEGLKHSAPLSWGWFGTIRVDRKVTKFEEQQRLLLYHTHIKPKQRSYYLAPLNLPQEEEEPLTPVPPEPDKKLDTAKVEKSVSNVPTKKKKKKPASTVKQEDYKPHNTVMQYAPGMTPDLPLSMGQTNMSYRMGYQAPMNMYAQNQPLPPGGPGLEPPFRPRVPMNKMPPRPNYTMPNMQTAGMGNLMGMEKQYQMNYKPMPNMAQGQMLRHQLQGHNHLIGQQIRQVTPNPQYSSMQPAQNIPQGYTSYGSHMGMQPHPSQTPGMVPNSYGNQGFQTGHPATNPTMVDSIRQMQQRPGYVHQQAPAAYGHTIQSTQRFPHQSMQQTPMMHGLAQSHLGVQGIHPNMRPNQMMEQQQQQQQQQQQQQQQQQQVHQQQQHIRQGPVFRPQQQQQVQQQVQQQVQQQQVQQQQVQQQVQPQQVQQQQVQQQQQQQVSAAQPPAQALGMQALPPQQPMFQRQGMQQTQQQQQTAALVRQLQQQLSSTQPAQNNSSYY.

Disordered regions lie at residues M1 to D34, G318 to N345, A630 to D718, K784 to A804, M1380 to S1404, E1443 to S1467, E1737 to E1780, and Q2020 to Q2068. The span at Q702–M717 shows a compositional bias: basic and acidic residues. The span at G1389–S1404 shows a compositional bias: low complexity. 2 stretches are compositionally biased toward basic and acidic residues: residues E1443 to K1462 and E1747 to K1759. The span at Q2034 to Q2057 shows a compositional bias: low complexity.

The protein belongs to the Mediator complex subunit 12 family. Component of the Mediator complex.

The protein localises to the nucleus. Its function is as follows. Component of the Mediator complex, a coactivator involved in regulated gene transcription of nearly all RNA polymerase II-dependent genes. Mediator functions as a bridge to convey information from gene-specific regulatory proteins to the basal RNA polymerase II transcription machinery. Mediator is recruited to promoters by direct interactions with regulatory proteins and serves as a scaffold for the assembly of a functional preinitiation complex with RNA polymerase II and the general transcription factors. Required for development of the body axis, brain, ear, kidney, forelimb and neural crest and for pigmentation. Acts as a coactivator for sox9a and/or sox9b promoting the expression of several neuronal determination genes. The sequence is that of Mediator of RNA polymerase II transcription subunit 12 (med12) from Danio rerio (Zebrafish).